The following is a 98-amino-acid chain: MADGVAVTLVVRLTPRGGRDAAEGWALDADGRLYLKVRVASPPVEGAANAALIAFLAKTLKIPRSAVRLAAGETARLKRLELEGVDPADVARAFGPPN.

This sequence belongs to the UPF0235 family.

The chain is UPF0235 protein CCNA_03737 from Caulobacter vibrioides (strain NA1000 / CB15N) (Caulobacter crescentus).